Reading from the N-terminus, the 700-residue chain is Acyl-coenzyme A oxidase 2 (700 aa).

Belongs to the acyl-CoA oxidase family. Heteropentamer composed of five different subunits. FAD serves as cofactor.

It localises to the peroxisome. The enzyme catalyses a 2,3-saturated acyl-CoA + O2 = a (2E)-enoyl-CoA + H2O2. It participates in lipid metabolism; peroxisomal fatty acid beta-oxidation. Functionally, oxidizes strain chain acyl-CoAs with a chain length of 10 to 14 carbons. Also active toward the 2S isomers of acyl-CoA-esters containing a 2-methyl group. This chain is Acyl-coenzyme A oxidase 2 (POX2), found in Yarrowia lipolytica (strain CLIB 122 / E 150) (Yeast).